Reading from the N-terminus, the 165-residue chain is Crossover junction endodeoxyribonuclease RuvC (165 aa).

Catalysis depends on residues aspartate 7, glutamate 68, and histidine 142. Aspartate 7, glutamate 68, and histidine 142 together coordinate Mg(2+).

Belongs to the RuvC family. As to quaternary structure, homodimer which binds Holliday junction (HJ) DNA. The HJ becomes 2-fold symmetrical on binding to RuvC with unstacked arms; it has a different conformation from HJ DNA in complex with RuvA. In the full resolvosome a probable DNA-RuvA(4)-RuvB(12)-RuvC(2) complex forms which resolves the HJ. Mg(2+) serves as cofactor.

Its subcellular location is the cytoplasm. The catalysed reaction is Endonucleolytic cleavage at a junction such as a reciprocal single-stranded crossover between two homologous DNA duplexes (Holliday junction).. Its function is as follows. The RuvA-RuvB-RuvC complex processes Holliday junction (HJ) DNA during genetic recombination and DNA repair. Endonuclease that resolves HJ intermediates. Cleaves cruciform DNA by making single-stranded nicks across the HJ at symmetrical positions within the homologous arms, yielding a 5'-phosphate and a 3'-hydroxyl group; requires a central core of homology in the junction. The consensus cleavage sequence is 5'-(A/T)TT(C/G)-3'. Cleavage occurs on the 3'-side of the TT dinucleotide at the point of strand exchange. HJ branch migration catalyzed by RuvA-RuvB allows RuvC to scan DNA until it finds its consensus sequence, where it cleaves and resolves the cruciform DNA. The protein is Crossover junction endodeoxyribonuclease RuvC of Anaplasma marginale (strain Florida).